The primary structure comprises 390 residues: Formate-dependent phosphoribosylglycinamide formyltransferase (390 aa).

Residues 18–19 and E78 contribute to the N(1)-(5-phospho-beta-D-ribosyl)glycinamide site; that span reads EL. Residues R110, K151, 156–161, 191–194, and E199 each bind ATP; these read SSGKGQ and EEFL. Residues 115 to 305 form the ATP-grasp domain; that stretch reads DLASKELNIK…EFELHLRAFL (191 aa). E264 and E276 together coordinate Mg(2+). N(1)-(5-phospho-beta-D-ribosyl)glycinamide-binding positions include D283, K353, and 360–361; that span reads RR.

The protein belongs to the PurK/PurT family. As to quaternary structure, homodimer.

The enzyme catalyses N(1)-(5-phospho-beta-D-ribosyl)glycinamide + formate + ATP = N(2)-formyl-N(1)-(5-phospho-beta-D-ribosyl)glycinamide + ADP + phosphate + H(+). It participates in purine metabolism; IMP biosynthesis via de novo pathway; N(2)-formyl-N(1)-(5-phospho-D-ribosyl)glycinamide from N(1)-(5-phospho-D-ribosyl)glycinamide (formate route): step 1/1. Involved in the de novo purine biosynthesis. Catalyzes the transfer of formate to 5-phospho-ribosyl-glycinamide (GAR), producing 5-phospho-ribosyl-N-formylglycinamide (FGAR). Formate is provided by PurU via hydrolysis of 10-formyl-tetrahydrofolate. This Prochlorococcus marinus (strain MIT 9515) protein is Formate-dependent phosphoribosylglycinamide formyltransferase.